A 168-amino-acid polypeptide reads, in one-letter code: Cyclic pyranopterin monophosphate synthase (168 aa).

Substrate-binding positions include 83 to 85 and 121 to 122; these read LCH and ME. Residue Asp136 is part of the active site.

This sequence belongs to the MoaC family. As to quaternary structure, homohexamer; trimer of dimers.

It catalyses the reaction (8S)-3',8-cyclo-7,8-dihydroguanosine 5'-triphosphate = cyclic pyranopterin phosphate + diphosphate. It participates in cofactor biosynthesis; molybdopterin biosynthesis. In terms of biological role, catalyzes the conversion of (8S)-3',8-cyclo-7,8-dihydroguanosine 5'-triphosphate to cyclic pyranopterin monophosphate (cPMP). The protein is Cyclic pyranopterin monophosphate synthase of Nostoc sp. (strain PCC 7120 / SAG 25.82 / UTEX 2576).